The sequence spans 156 residues: Small ribosomal subunit protein uS7 (156 aa).

This sequence belongs to the universal ribosomal protein uS7 family. As to quaternary structure, part of the 30S ribosomal subunit. Contacts proteins S9 and S11.

Its function is as follows. One of the primary rRNA binding proteins, it binds directly to 16S rRNA where it nucleates assembly of the head domain of the 30S subunit. Is located at the subunit interface close to the decoding center, probably blocks exit of the E-site tRNA. This Thermobifida fusca (strain YX) protein is Small ribosomal subunit protein uS7.